A 220-amino-acid chain; its full sequence is Protein-L-isoaspartate O-methyltransferase (220 aa).

The active site involves Ser70.

The protein belongs to the methyltransferase superfamily. L-isoaspartyl/D-aspartyl protein methyltransferase family.

The protein resides in the cytoplasm. It carries out the reaction [protein]-L-isoaspartate + S-adenosyl-L-methionine = [protein]-L-isoaspartate alpha-methyl ester + S-adenosyl-L-homocysteine. In terms of biological role, catalyzes the methyl esterification of L-isoaspartyl residues in peptides and proteins that result from spontaneous decomposition of normal L-aspartyl and L-asparaginyl residues. It plays a role in the repair and/or degradation of damaged proteins. This chain is Protein-L-isoaspartate O-methyltransferase, found in Halorhodospira halophila (strain DSM 244 / SL1) (Ectothiorhodospira halophila (strain DSM 244 / SL1)).